A 492-amino-acid chain; its full sequence is Tumor necrosis factor receptor superfamily member 8 (492 aa).

Residues 1–18 form the signal peptide; sequence MSILLKAAGLLFLGMLQA. Residues 19–282 are Extracellular-facing; that stretch reads FPKDRPLDTT…STGTPFLDPG (264 aa). TNFR-Cys repeat units lie at residues 57–104 and 105–141; these read PCPQ…PRIC and ECQP…NTIC. Cystine bridges form between C58-C80, C83-C96, C86-C104, and C123-C141. Positions 141–178 are disordered; it reads CDLPSPGSGPNGSNPDDCKTLTSHTTPQAIPTLESPAN. A compositionally biased stretch (low complexity) spans 144–155; sequence PSPGSGPNGSNP. 3 N-linked (GlcNAc...) asparagine glycosylation sites follow: N151, N178, and N224. Over residues 160–178 the composition is skewed to polar residues; sequence TLTSHTTPQAIPTLESPAN. Residues 283 to 303 form a helical membrane-spanning segment; it reads SMLFWVAMVVLLVGSASFLLC. The Cytoplasmic portion of the chain corresponds to 304 to 492; it reads YWKACRRRFQ…DHEPTTVSEK (189 aa). Phosphoserine occurs at positions 334 and 348. Disordered regions lie at residues 336–366 and 432–492; these read PTEK…PPAV and PEGR…VSEK. Residues 339–360 show a composition bias toward polar residues; the sequence is KLTQLQRSGSVTDSSAGHTLSP. Composition is skewed to basic and acidic residues over residues 450-459 and 478-492; these read EVDHTPHYPE and EGGK…VSEK.

This sequence belongs to the TNFR8 family. Interacts with TRAF1, TRAF2, TRAF3 and TRAF5. As to expression, very low level of expression. Detected in spleen, thymus and lung. Highly expressed in HTLV-1 infected T-cell lines.

It is found in the cell membrane. Functionally, receptor for TNFSF8/CD30L. May play a role in the regulation of cellular growth and transformation of activated lymphoblasts. Regulates gene expression through activation of NF-kappa-B. This chain is Tumor necrosis factor receptor superfamily member 8, found in Rattus norvegicus (Rat).